Here is a 392-residue protein sequence, read N- to C-terminus: 8-amino-7-oxononanoate synthase (392 aa).

R26 is a binding site for substrate. Position 113–114 (G113–Y114) interacts with pyridoxal 5'-phosphate. H138 lines the substrate pocket. Residues S186, H214, and T241 each coordinate pyridoxal 5'-phosphate. K244 is modified (N6-(pyridoxal phosphate)lysine). T353 lines the substrate pocket.

It belongs to the class-II pyridoxal-phosphate-dependent aminotransferase family. BioF subfamily. As to quaternary structure, homodimer. Pyridoxal 5'-phosphate is required as a cofactor.

The enzyme catalyses 6-carboxyhexanoyl-[ACP] + L-alanine + H(+) = (8S)-8-amino-7-oxononanoate + holo-[ACP] + CO2. Its pathway is cofactor biosynthesis; biotin biosynthesis. In terms of biological role, catalyzes the decarboxylative condensation of pimeloyl-[acyl-carrier protein] and L-alanine to produce 8-amino-7-oxononanoate (AON), [acyl-carrier protein], and carbon dioxide. The chain is 8-amino-7-oxononanoate synthase from Maricaulis maris (strain MCS10) (Caulobacter maris).